The chain runs to 276 residues: Putative aliphatic sulfonates transport permease protein SsuC (276 aa).

7 consecutive transmembrane segments (helical) span residues G32–V52, A54–G74, A87–F107, L119–D141, I146–V168, I199–L219, and V242–L262. The 181-residue stretch at L80–V260 folds into the ABC transmembrane type-1 domain.

The protein belongs to the binding-protein-dependent transport system permease family. CysTW subfamily.

It localises to the cell membrane. Its function is as follows. Part of a binding-protein-dependent transport system for aliphatic sulfonates. Probably responsible for the translocation of the substrate across the membrane. The protein is Putative aliphatic sulfonates transport permease protein SsuC (ssuC) of Bacillus subtilis (strain 168).